The chain runs to 185 residues: Peptidyl-tRNA hydrolase (185 aa).

Y14 is a binding site for tRNA. The Proton acceptor role is filled by H19. Residues F64, N66, and N112 each coordinate tRNA.

Belongs to the PTH family. In terms of assembly, monomer.

Its subcellular location is the cytoplasm. The enzyme catalyses an N-acyl-L-alpha-aminoacyl-tRNA + H2O = an N-acyl-L-amino acid + a tRNA + H(+). Functionally, hydrolyzes ribosome-free peptidyl-tRNAs (with 1 or more amino acids incorporated), which drop off the ribosome during protein synthesis, or as a result of ribosome stalling. In terms of biological role, catalyzes the release of premature peptidyl moieties from peptidyl-tRNA molecules trapped in stalled 50S ribosomal subunits, and thus maintains levels of free tRNAs and 50S ribosomes. This Lactobacillus johnsonii (strain CNCM I-12250 / La1 / NCC 533) protein is Peptidyl-tRNA hydrolase.